The chain runs to 99 residues: High mobility group nucleosome-binding domain-containing protein 3 (99 aa).

2 stretches are compositionally biased toward basic and acidic residues: residues 1–25 and 39–53; these read MPKR…EPTR and PESK…KEPG. Residues 1–99 form a disordered region; sequence MPKRKSPENT…RTESIEKEGE (99 aa). Ser6 bears the Phosphoserine mark. Thr10 is subject to Phosphothreonine. Phosphoserine occurs at positions 78 and 93. Positions 83–99 are enriched in basic and acidic residues; that stretch reads TKVEEAQRTESIEKEGE.

This sequence belongs to the HMGN family. As to quaternary structure, interacts with the ligand binding domain of the thyroid receptor (TR) (in vitro). Requires the presence of thyroid hormone for its interaction. Interacts with transcriptional regulator SEHBP. Interacts with nucleosomes. In terms of tissue distribution, expressed in the brain, eye, prostate, thyroid, kidney, testis, glial cells and insulin-producing cells of the Langerhans pancreatic islets. In the brain, expressed in the lateral olfactory tract, anterior commissure, corpus callosum, internal capsule, fornix, stria medullans, optic tract, axon bundles, Purkinje cell layer and granular layer of the cerebellum. In retina, expressed in the nuclei of cells in the inner nuclear layer including amacrine, bipolar and horizontal neurons and in the nuclei of ganglion neurons. Detected at low levels in the liver.

The protein localises to the nucleus. Its function is as follows. Binds to nucleosomes, regulating chromatin structure and consequently, chromatin-dependent processes such as transcription, DNA replication and DNA repair. Affects both insulin and glucagon levels and modulates the expression of pancreatic genes involved in insulin secretion. Regulates the expression of the glucose transporter SLC2A2 by binding specifically to its promoter region and recruiting PDX1 and additional transcription factors. Regulates the expression of SLC6A9, a glycine transporter which regulates the glycine concentration in synaptic junctions in the central nervous system, by binding to its transcription start site. May play a role in ocular development and astrocyte function. The polypeptide is High mobility group nucleosome-binding domain-containing protein 3 (Hmgn3) (Mus musculus (Mouse)).